The sequence spans 569 residues: DNA-binding protein eta2 (569 aa).

Disordered stretches follow at residues 1 to 26 and 133 to 159; these read MMLA…TLSC and KRKI…AKKR. Residues 9 to 26 are compositionally biased toward polar residues; that stretch reads INENQGTRSNLESPTLSC. The residue at position 21 (S21) is a Phosphoserine. Myb-like domains follow at residues 322 to 371 and 377 to 459; these read LDPK…RFVV and ETID…EKTI. The disordered stretch occupies residues 459 to 487; sequence IASYSSNQRQEEDQGKKRKKRKKKKSKGK. Over residues 474–487 the composition is skewed to basic residues; that stretch reads KKRKKRKKKKSKGK.

The protein resides in the nucleus. This Schizosaccharomyces pombe (strain 972 / ATCC 24843) (Fission yeast) protein is DNA-binding protein eta2 (eta2).